Reading from the N-terminus, the 364-residue chain is UDP-N-acetylglucosamine--N-acetylmuramyl-(pentapeptide) pyrophosphoryl-undecaprenol N-acetylglucosamine transferase (364 aa).

Residues 10-12 (TGG), Asn124, Arg166, Ser196, and Gln297 contribute to the UDP-N-acetyl-alpha-D-glucosamine site.

It belongs to the glycosyltransferase 28 family. MurG subfamily.

The protein resides in the cell membrane. The catalysed reaction is di-trans,octa-cis-undecaprenyl diphospho-N-acetyl-alpha-D-muramoyl-L-alanyl-D-glutamyl-meso-2,6-diaminopimeloyl-D-alanyl-D-alanine + UDP-N-acetyl-alpha-D-glucosamine = di-trans,octa-cis-undecaprenyl diphospho-[N-acetyl-alpha-D-glucosaminyl-(1-&gt;4)]-N-acetyl-alpha-D-muramoyl-L-alanyl-D-glutamyl-meso-2,6-diaminopimeloyl-D-alanyl-D-alanine + UDP + H(+). The protein operates within cell wall biogenesis; peptidoglycan biosynthesis. In terms of biological role, cell wall formation. Catalyzes the transfer of a GlcNAc subunit on undecaprenyl-pyrophosphoryl-MurNAc-pentapeptide (lipid intermediate I) to form undecaprenyl-pyrophosphoryl-MurNAc-(pentapeptide)GlcNAc (lipid intermediate II). This chain is UDP-N-acetylglucosamine--N-acetylmuramyl-(pentapeptide) pyrophosphoryl-undecaprenol N-acetylglucosamine transferase, found in Caldanaerobacter subterraneus subsp. tengcongensis (strain DSM 15242 / JCM 11007 / NBRC 100824 / MB4) (Thermoanaerobacter tengcongensis).